The sequence spans 309 residues: DnaJ protein ERDJ7 (309 aa).

The N-terminal stretch at 1–36 (MSQVGSAGEGSNSMAAAPPPRLLLLVVLLLVPVSNA) is a signal peptide. Residues 37-130 (IYCEEDDCYD…YRAYYGHKTD (94 aa)) lie on the Lumenal side of the membrane. One can recognise a J domain in the interval 43-107 (DCYDLLGVKQ…STRGQYDYAI (65 aa)). Asn-55 carries N-linked (GlcNAc...) asparagine glycosylation. Residues 131–151 (PRAVLIGLLLIISAFQYLNQF) form a helical membrane-spanning segment. Topologically, residues 152–219 (GRYSKAIETV…GVEKPSLWRL (68 aa)) are cytoplasmic. The chain crosses the membrane as a helical span at residues 220–242 (YGVQFILLPYSIGKVLSWKFCWF). The Lumenal portion of the chain corresponds to 243–309 (WRYRIKKLPY…EMRKESKRRR (67 aa)).

The protein localises to the endoplasmic reticulum membrane. May play a role in protein folding in the endoplasmic reticulum. This is DnaJ protein ERDJ7 from Oryza sativa subsp. japonica (Rice).